Reading from the N-terminus, the 114-residue chain is Putative movement protein (114 aa).

A helical membrane pass occupies residues 27-47 (LIGIILLVTVCLTVLWVCIML). The disordered stretch occupies residues 79-114 (RTPFEATGPERERNWEARRQSTTVNPASQPNTGSVF). Positions 86-97 (GPERERNWEARR) are enriched in basic and acidic residues. Residues 98 to 114 (QSTTVNPASQPNTGSVF) are compositionally biased toward polar residues.

This sequence belongs to the nanovirus movement protein family.

Its subcellular location is the host cell membrane. Its function is as follows. May transport viral genome to neighboring plant cells directly through plasmosdesmata, without any budding. The movement protein allows efficient cell to cell propagation, by bypassing the host cell wall barrier. In Faba bean necrotic yellows virus (isolate Egyptian EV1-93) (FBNYV), this protein is Putative movement protein (DNA-M).